A 416-amino-acid chain; its full sequence is Splicing factor U2AF 50 kDa subunit (416 aa).

A compositionally biased stretch (basic and acidic residues) spans 1–10 (MGYDDRERDR). Residues 1 to 47 (MGYDDRERDRERRRHRSRSRDRHRERSRDRRHHRNSRRKPSLYWDVP) are disordered. Basic residues-rich tracts occupy residues 11-21 (ERRRHRSRSRD) and 29-40 (DRRHHRNSRRKP). RRM domains lie at 93–175 (RRLY…RPHD), 207–285 (HKIF…RASV), and 318–408 (EVLC…YFDP).

The protein belongs to the splicing factor SR family. Forms a heterodimer with the U2AF small subunit.

It is found in the nucleus. Functionally, necessary for the splicing of pre-mRNA. Binds to the polypyrimidine tract of introns early during spliceosome assembly. The chain is Splicing factor U2AF 50 kDa subunit (U2af50) from Drosophila melanogaster (Fruit fly).